We begin with the raw amino-acid sequence, 170 residues long: Protein SprT (170 aa).

One can recognise a SprT-like domain in the interval 23-165 (QLANQHLGTD…RECGEKLQFV (143 aa)). His-78 provides a ligand contact to Zn(2+). Residue Glu-79 is part of the active site. His-82 lines the Zn(2+) pocket.

The protein belongs to the SprT family. Requires Zn(2+) as cofactor.

The protein localises to the cytoplasm. The sequence is that of Protein SprT from Yersinia enterocolitica serotype O:8 / biotype 1B (strain NCTC 13174 / 8081).